Here is a 792-residue protein sequence, read N- to C-terminus: Ribonucleoside-diphosphate reductase large subunit (792 aa).

Residues Thr200, 215-216, Gly246, 415-419, and 606-610 each bind substrate; these read SC, NLCAE, and PTAGT. An intrachain disulfide couples Cys216 to Cys431. The Proton acceptor role is filled by Asn415. Cys417 functions as the Cysteine radical intermediate in the catalytic mechanism. Glu419 (proton acceptor) is an active-site residue. Residues 758–781 form a disordered region; that stretch reads SPPHSGMKQDGAWLPGPKNPEEES.

This sequence belongs to the ribonucleoside diphosphate reductase large chain family. Heterotetramer composed of a homodimer of the large subunit (R1) and a homodimer of the small subunit (R2). Larger multisubunit protein complex are also active, composed of (R1)n(R2)n.

It carries out the reaction a 2'-deoxyribonucleoside 5'-diphosphate + [thioredoxin]-disulfide + H2O = a ribonucleoside 5'-diphosphate + [thioredoxin]-dithiol. Its function is as follows. Ribonucleoside-diphosphate reductase holoenzyme provides the precursors necessary for viral DNA synthesis. Allows virus growth in non-dividing cells, as well as reactivation from latency in infected hosts. Catalyzes the biosynthesis of deoxyribonucleotides from the corresponding ribonucleotides. The protein is Ribonucleoside-diphosphate reductase large subunit of Human herpesvirus 8 type P (isolate GK18) (HHV-8).